A 166-amino-acid polypeptide reads, in one-letter code: Ribonuclease H2 subunit C (166 aa).

An N-acetylmethionine modification is found at Met1.

Belongs to the RNase H2 subunit C family. As to quaternary structure, the RNase H2 complex is a heterotrimer composed of the catalytic subunit RNASEH2A and the non-catalytic subunits RNASEH2B and RNASEH2C.

It localises to the nucleus. In terms of biological role, non catalytic subunit of RNase H2, an endonuclease that specifically degrades the RNA of RNA:DNA hybrids. Participates in DNA replication, possibly by mediating the removal of lagging-strand Okazaki fragment RNA primers during DNA replication. Mediates the excision of single ribonucleotides from DNA:RNA duplexes. The chain is Ribonuclease H2 subunit C (Rnaseh2c) from Mus musculus (Mouse).